The following is a 566-amino-acid chain: SRSF protein kinase 3 (566 aa).

Over residues 1-13 (MSASTGGGGGGDS) the composition is skewed to gly residues. The interval 1–60 (MSASTGGGGGGDSGSSSSSSSQASCGPEPSGSELAPPTPAPRMLQGLLGSDDEEQEDPKD) is disordered. The segment covering 14–26 (GSSSSSSSQASCG) has biased composition (low complexity). Residue Ser50 is modified to Phosphoserine. The region spanning 79–564 (YHVVRKLGWG…AADCLQHPWL (486 aa)) is the Protein kinase domain. Residues 85–93 (LGWGHFSTV) and Lys108 each bind ATP. The active-site Proton acceptor is the Asp212. Residues 236-254 (EWQQSGAPPPSRSTVSTAP) are compositionally biased toward polar residues. Disordered stretches follow at residues 236–283 (EWQQ…LLEE) and 295–353 (EAAA…SGFS). Residues 263-278 (SKNKRKKMRRKRKQQK) show a composition bias toward basic residues. Residue Ser329 is modified to Phosphoserine. Low complexity predominate over residues 330–339 (PASSSPAPGG). The segment covering 344-353 (SPGSQTSGFS) has biased composition (polar residues).

It belongs to the protein kinase superfamily. In terms of tissue distribution, highly expressed in skeletal muscle, heart, uterus and parorchis. Weakly expressed in brain, stomach, small intestine and ovary.

Its subcellular location is the nucleus. It is found in the cytoplasm. The enzyme catalyses L-seryl-[protein] + ATP = O-phospho-L-seryl-[protein] + ADP + H(+). The catalysed reaction is L-threonyl-[protein] + ATP = O-phospho-L-threonyl-[protein] + ADP + H(+). Functionally, serine/arginine-rich protein-specific kinase which specifically phosphorylates its substrates at serine residues located in regions rich in arginine/serine dipeptides, known as RS domains. Phosphorylates the SR splicing factor SRSF1 and the lamin-B receptor (LBR) in vitro. Required for normal muscle development. This chain is SRSF protein kinase 3 (SRPK3), found in Sus scrofa (Pig).